The following is a 1040-amino-acid chain: Alpha-mannosidase 2C1 (1040 aa).

Co(2+)-binding residues include H260, D262, D372, and H577. D372 serves as the catalytic Nucleophile.

The protein belongs to the glycosyl hydrolase 38 family. It depends on Co(2+) as a cofactor.

It is found in the cytoplasm. It carries out the reaction Hydrolysis of terminal, non-reducing alpha-D-mannose residues in alpha-D-mannosides.. Strongly inhibited by swainsonine. Also inhibited to a lesser extent by deoxymannojirimycin (DMM). Cleaves alpha 1,2-, alpha 1,3-, and alpha 1,6-linked mannose residues on cytoplasmic free oligosaccharides generated by N-glycoprotein degradation pathways. The polypeptide is Alpha-mannosidase 2C1 (MAN2C1) (Homo sapiens (Human)).